The primary structure comprises 130 residues: Small ribosomal subunit protein uS11 (130 aa).

It belongs to the universal ribosomal protein uS11 family. Part of the 30S ribosomal subunit. Interacts with proteins S7 and S18. Binds to IF-3.

Its function is as follows. Located on the platform of the 30S subunit, it bridges several disparate RNA helices of the 16S rRNA. Forms part of the Shine-Dalgarno cleft in the 70S ribosome. The chain is Small ribosomal subunit protein uS11 from Thermoanaerobacter sp. (strain X514).